The sequence spans 164 residues: Transcriptional regulator MraZ (164 aa).

2 SpoVT-AbrB domains span residues 7–60 (HYTN…EIDG) and 83–126 (SEIL…EPGR). Residues 144-164 (QLSARHAAPDAPPLRSHGARE) are disordered.

The protein belongs to the MraZ family. As to quaternary structure, forms oligomers.

It is found in the cytoplasm. The protein localises to the nucleoid. This Methylocella silvestris (strain DSM 15510 / CIP 108128 / LMG 27833 / NCIMB 13906 / BL2) protein is Transcriptional regulator MraZ.